The following is a 380-amino-acid chain: Putative glutamate--cysteine ligase 2-2 (380 aa).

This sequence belongs to the glutamate--cysteine ligase type 2 family. YbdK subfamily.

The enzyme catalyses L-cysteine + L-glutamate + ATP = gamma-L-glutamyl-L-cysteine + ADP + phosphate + H(+). In terms of biological role, ATP-dependent carboxylate-amine ligase which exhibits weak glutamate--cysteine ligase activity. The polypeptide is Putative glutamate--cysteine ligase 2-2 (Nocardia farcinica (strain IFM 10152)).